The sequence spans 444 residues: Endothelin-3 receptor (444 aa).

Residues 1-18 form the signal peptide; it reads MATVILFVAWMACLMVGV. Topologically, residues 19–88 are extracellular; it reads CYQEFQTQQN…SRAKIRHAFK (70 aa). The N-linked (GlcNAc...) asparagine glycan is linked to asparagine 60. Residues 89-113 form a helical membrane-spanning segment; the sequence is YVTTILSCVIFLVGIVGNSTLLRII. The Cytoplasmic portion of the chain corresponds to 114 to 124; it reads YKNKCMRNGPN. The helical transmembrane segment at 125 to 145 threads the bilayer; it reads VLIASLALGDLFYILIAIPII. Topologically, residues 146–161 are extracellular; that stretch reads SISFWLSTGHSEYIYQ. The helical transmembrane segment at 162–180 threads the bilayer; that stretch reads LVHLYRARVYSLSLCALSI. At 181 to 201 the chain is on the cytoplasmic side; that stretch reads DRYRAVASWNRIRSIGIPVRK. The helical transmembrane segment at 202–226 threads the bilayer; that stretch reads AIELTLIWAVAIIVAVPEAIAFNLV. The Extracellular segment spans residues 227-254; the sequence is ELDFRGQTILVCMLPMEQTSDFMRFYQE. A helical transmembrane segment spans residues 255–279; that stretch reads VKVWWLFGFYFCLPLACTGVFYTLM. Residues 280 to 307 lie on the Cytoplasmic side of the membrane; the sequence is SCEMLSIKNGMRIALNDHMKQRREVAKT. Residues 308-328 traverse the membrane as a helical segment; sequence VFCLVVIFALCWLPLHVSSIF. Residues 329–365 are Extracellular-facing; that stretch reads VRLSATVKRACILKNKRSCIMAEIQTGVNYQLLMVMN. The helical transmembrane segment at 366–386 threads the bilayer; that stretch reads YTGINMASLNSCIGPVALYFV. The Cytoplasmic segment spans residues 387-444; that stretch reads SRKFKNCFQSCLCCWCHRPTLTITPMDEKGSGGKWKANGHDLDLDRSSSRLSNKYSSS. Positions 416 to 444 are disordered; that stretch reads GSGGKWKANGHDLDLDRSSSRLSNKYSSS. Residues 424-434 are compositionally biased toward basic and acidic residues; that stretch reads NGHDLDLDRSS. The segment covering 435–444 has biased composition (low complexity); the sequence is SRLSNKYSSS.

This sequence belongs to the G-protein coupled receptor 1 family. Endothelin receptor subfamily.

It localises to the cell membrane. Receptor for endothelin-3. Mediates its action by association with G proteins that activate a phosphatidylinositol-calcium second messenger system. The protein is Endothelin-3 receptor of Xenopus laevis (African clawed frog).